The sequence spans 230 residues: MKKKKALPSFLYLVFIVLLPWGVSFSFNKCLELWIKNWWNTRQSETFLTDIQEKRILEGFIELEELFLLDEMIKEKPKTHVQKLPIGIHKEIIQLAKIDNEDHLHIILHFSTNIICLAILSGSFFLGKEELVILNSWVQEFFYNLNDSIKAFFILLVTDFFVGFHSTRGWELLIRWVYNNLGWAPNELIFTIFVCSFPVILDTCLKFWVFFCLNRLSPSLVVIYHSISEA.

Transmembrane regions (helical) follow at residues 7 to 27, 106 to 126, 145 to 165, and 181 to 201; these read LPSF…SFSF, IILH…SFFL, LNDS…VGFH, and LGWA…PVIL.

This sequence belongs to the CemA family.

The protein localises to the plastid. It is found in the chloroplast inner membrane. It catalyses the reaction K(+)(in) + H(+)(out) = K(+)(out) + H(+)(in). Contributes to K(+)/H(+) antiport activity by supporting proton efflux to control proton extrusion and homeostasis in chloroplasts in a light-dependent manner to modulate photosynthesis. Prevents excessive induction of non-photochemical quenching (NPQ) under continuous-light conditions. Indirectly promotes efficient inorganic carbon uptake into chloroplasts. This is Potassium/proton antiporter CemA from Zea mays (Maize).